A 304-amino-acid polypeptide reads, in one-letter code: Peroxisomal membrane protein 13 (304 aa).

2 disordered regions span residues 1-78 (MASQ…WEQQ) and 258-304 (PRKM…VWGN). Composition is skewed to polar residues over residues 19–44 (NTSG…SGTA) and 56–67 (RPNTAANMNSLS). Over residues 262–279 (QQPPQGPNGLPLPHQPHG) the composition is skewed to low complexity.

It belongs to the peroxin-13 family. Interacts with PEX14; forming the PEX13-PEX14 docking complex. Interacts (via N-terminus) with PEX7, but not with PEX5. Interacts with APEM9 (via N-terminus). In terms of tissue distribution, highly expressed in pollen. Detected in shoots, roots, stems, leaves, inflorescences and emasculated postils. Strongly expressed in both male and female gametophytes during fertilization.

The protein resides in the peroxisome membrane. Functionally, component of the PEX13-PEX14 docking complex, a translocon channel that specifically mediates the import of peroxisomal cargo proteins bound to PEX5 receptor. The PEX13-PEX14 docking complex forms a large import pore which can be opened to a diameter of about 9 nm. Mechanistically, PEX5 receptor along with cargo proteins associates with the PEX14 subunit of the PEX13-PEX14 docking complex in the cytosol, leading to the insertion of the receptor into the organelle membrane with the concomitant translocation of the cargo into the peroxisome matrix. Essential for pollen-tube discharge that take place only in the presence of functional peroxisomes in either the male or the female gametophyte. This Arabidopsis thaliana (Mouse-ear cress) protein is Peroxisomal membrane protein 13.